We begin with the raw amino-acid sequence, 487 residues long: Glutamyl-tRNA(Gln) amidotransferase subunit A (487 aa).

Active-site charge relay system residues include Lys-75 and Ser-150. Catalysis depends on Ser-174, which acts as the Acyl-ester intermediate.

It belongs to the amidase family. GatA subfamily. Heterotrimer of A, B and C subunits.

It carries out the reaction L-glutamyl-tRNA(Gln) + L-glutamine + ATP + H2O = L-glutaminyl-tRNA(Gln) + L-glutamate + ADP + phosphate + H(+). Allows the formation of correctly charged Gln-tRNA(Gln) through the transamidation of misacylated Glu-tRNA(Gln) in organisms which lack glutaminyl-tRNA synthetase. The reaction takes place in the presence of glutamine and ATP through an activated gamma-phospho-Glu-tRNA(Gln). In Syntrophomonas wolfei subsp. wolfei (strain DSM 2245B / Goettingen), this protein is Glutamyl-tRNA(Gln) amidotransferase subunit A.